A 423-amino-acid polypeptide reads, in one-letter code: Ferrochelatase, mitochondrial (423 aa).

A mitochondrion-targeting transit peptide spans 1-54 (MRSLGANMAAALRAAGVLLRDPLVSSSWRVYQPWRWKSVAAAAAATTETAQHAQ). Lysine 57 is subject to N6-acetyllysine. Protoporphyrin IX-binding residues include arginine 115, tyrosine 123, and serine 130. Lysine 138 bears the N6-succinyllysine mark. Cysteine 196 is a [2Fe-2S] cluster binding site. Catalysis depends on residues histidine 230 and aspartate 383. Cysteine 403, cysteine 406, and cysteine 411 together coordinate [2Fe-2S] cluster. Lysine 415 carries the post-translational modification N6-acetyllysine; alternate. At lysine 415 the chain carries N6-succinyllysine; alternate.

This sequence belongs to the ferrochelatase family. Homodimer. Homotetramer. Interaction with PGRMC1; the interaction results in decreased FECH activity. Interacts with ABCB10 and SLC25A37; this interaction forms an oligomeric complex. Forms a complex with ABCB7 and ABCB10, where a dimeric FECH bridges ABCB7 and ABCB10 homodimers; this complex may be required for cellular iron homeostasis, mitochondrial function and heme biosynthesis. Interacts with ABCB7 and ABCB10. It depends on [2Fe-2S] cluster as a cofactor.

The protein resides in the mitochondrion inner membrane. The catalysed reaction is heme b + 2 H(+) = protoporphyrin IX + Fe(2+). The protein operates within porphyrin-containing compound metabolism; protoheme biosynthesis; protoheme from protoporphyrin-IX: step 1/1. Functionally, catalyzes the ferrous insertion into protoporphyrin IX and participates in the terminal step in the heme biosynthetic pathway. This Pan troglodytes (Chimpanzee) protein is Ferrochelatase, mitochondrial.